Reading from the N-terminus, the 396-residue chain is Tryptophan synthase beta chain (396 aa).

Lys-86 is subject to N6-(pyridoxal phosphate)lysine.

The protein belongs to the TrpB family. In terms of assembly, tetramer of two alpha and two beta chains. Requires pyridoxal 5'-phosphate as cofactor.

It catalyses the reaction (1S,2R)-1-C-(indol-3-yl)glycerol 3-phosphate + L-serine = D-glyceraldehyde 3-phosphate + L-tryptophan + H2O. Its pathway is amino-acid biosynthesis; L-tryptophan biosynthesis; L-tryptophan from chorismate: step 5/5. Its function is as follows. The beta subunit is responsible for the synthesis of L-tryptophan from indole and L-serine. This is Tryptophan synthase beta chain from Francisella tularensis subsp. novicida (strain U112).